Consider the following 420-residue polypeptide: Transcription activator GLK1 (420 aa).

The segment at 74–152 is disordered; sequence GDFSNHMNAS…NRISNNEGKR (79 aa). Residues 106–117 show a composition bias toward basic and acidic residues; it reads KGEEVVSKRDDV. Residues 135-147 show a composition bias toward low complexity; that stretch reads SSSASSKNNRISN. Positions 150–209 form a DNA-binding region, myb-like GARP; sequence GKRKVKVDWTPELHRRFVEAVEQLGVDKAVPSRILELMGVHCLTRHNVASHLQKYRSHRK.

In terms of assembly, interacts with NAC92. Expressed in rosette and cauline leaves. Expressed at low levels in cotyledons and shoots.

The protein resides in the nucleus. Functionally, transcriptional activator that functions with GLK2 to promote chloroplast development. Acts as an activator of nuclear photosynthetic genes involved in chlorophyll biosynthesis, light harvesting, and electron transport. Acts in a cell-autonomous manner to coordinate and maintain the photosynthetic apparatus within individual cells. May function in photosynthetic capacity optimization by integrating responses to variable environmental and endogenous cues. Prevents premature senescence. The chain is Transcription activator GLK1 (GLK1) from Arabidopsis thaliana (Mouse-ear cress).